Reading from the N-terminus, the 137-residue chain is Large ribosomal subunit protein uL16 (137 aa).

Residues 1 to 13 show a composition bias toward basic residues; the sequence is MLQPKRRKYRKEQ. The interval 1–22 is disordered; it reads MLQPKRRKYRKEQKGRNTGVAT.

The protein belongs to the universal ribosomal protein uL16 family. Part of the 50S ribosomal subunit.

Its function is as follows. Binds 23S rRNA and is also seen to make contacts with the A and possibly P site tRNAs. This Polynucleobacter asymbioticus (strain DSM 18221 / CIP 109841 / QLW-P1DMWA-1) (Polynucleobacter necessarius subsp. asymbioticus) protein is Large ribosomal subunit protein uL16.